Here is a 147-residue protein sequence, read N- to C-terminus: NAD(P)H-quinone oxidoreductase subunit N (147 aa).

The protein belongs to the complex I NdhN subunit family. As to quaternary structure, NDH-1 can be composed of about 15 different subunits; different subcomplexes with different compositions have been identified which probably have different functions.

Its subcellular location is the cellular thylakoid membrane. It catalyses the reaction a plastoquinone + NADH + (n+1) H(+)(in) = a plastoquinol + NAD(+) + n H(+)(out). The catalysed reaction is a plastoquinone + NADPH + (n+1) H(+)(in) = a plastoquinol + NADP(+) + n H(+)(out). In terms of biological role, NDH-1 shuttles electrons from an unknown electron donor, via FMN and iron-sulfur (Fe-S) centers, to quinones in the respiratory and/or the photosynthetic chain. The immediate electron acceptor for the enzyme in this species is believed to be plastoquinone. Couples the redox reaction to proton translocation, and thus conserves the redox energy in a proton gradient. Cyanobacterial NDH-1 also plays a role in inorganic carbon-concentration. The sequence is that of NAD(P)H-quinone oxidoreductase subunit N from Synechococcus sp. (strain JA-3-3Ab) (Cyanobacteria bacterium Yellowstone A-Prime).